A 145-amino-acid polypeptide reads, in one-letter code: MAEHYGQQQQTRAPHLQLQPRAQRVVKAATAVTAGGSLLVLSGLTLAGTVIALTIATPLLVIFSPVLVPAVITIFLLGAGFLASGGFGVAALSVLSWIYRYLTGKHPPGADQLESAKTKLASKAREMKDRAEQFSQQPVAGSQTS.

Ala-2 is modified (N-acetylalanine). The next 2 helical transmembrane spans lie at 36 to 56 and 59 to 79; these read GSLL…LTIA and LLVI…LLGA. A Proline-knot motif is present at residues 58 to 69; sequence PLLVIFSPVLVP. The span at 123–132 shows a compositional bias: basic and acidic residues; sequence KAREMKDRAE. The segment at 123-145 is disordered; sequence KAREMKDRAEQFSQQPVAGSQTS. Positions 133-145 are enriched in polar residues; that stretch reads QFSQQPVAGSQTS.

The protein belongs to the oleosin family. As to expression, expressed in seeds (at protein level).

The protein localises to the lipid droplet. It is found in the membrane. Its function is as follows. May have a structural role to stabilize the lipid body during desiccation of the seed by preventing coalescence of the oil. Probably interacts with both lipid and phospholipid moieties of lipid bodies. May also provide recognition signals for specific lipase anchorage in lipolysis during seedling growth. The sequence is that of Oleosin L from Sesamum indicum (Oriental sesame).